A 337-amino-acid polypeptide reads, in one-letter code: DNA-directed RNA polymerase subunit alpha (337 aa).

An alpha N-terminal domain (alpha-NTD) region spans residues 1–233; that stretch reads MVREEVAGST…DLFLPFLHTE (233 aa). The alpha C-terminal domain (alpha-CTD) stretch occupies residues 267–337; the sequence is IPLNCIFIDQ…LPMDLPKNKF (71 aa).

This sequence belongs to the RNA polymerase alpha chain family. In terms of assembly, in plastids the minimal PEP RNA polymerase catalytic core is composed of four subunits: alpha, beta, beta', and beta''. When a (nuclear-encoded) sigma factor is associated with the core the holoenzyme is formed, which can initiate transcription.

Its subcellular location is the plastid. The protein localises to the chloroplast. It carries out the reaction RNA(n) + a ribonucleoside 5'-triphosphate = RNA(n+1) + diphosphate. Functionally, DNA-dependent RNA polymerase catalyzes the transcription of DNA into RNA using the four ribonucleoside triphosphates as substrates. The chain is DNA-directed RNA polymerase subunit alpha from Oryza nivara (Indian wild rice).